Here is a 382-residue protein sequence, read N- to C-terminus: MSAYSRPVLLLLCGLLLFTISIAVLNTLVPLWLSHQQLPTWQVGMVSSSYFTGNLVGTLIAGRFIQQLGFNRSYHCSCILFALATCGLMLTVDFWSWLGWRFLAGIACALIWVIVESALLRSGTLTNRGQLLAAYMMVYYLGTVIGQLLLGIVSTQLLSVIPWVGALVITAMLPLLFAQFSHQSRHESPPIAVWPMLKRRSARLGINGCIISGVLLGSLYGLLPLYLSHKGMSDASVGGRMALLVSSGIIGQWPMGRMADRYGRLLVLRIQVFVVILGSVAILGNYAMAPALFILGCAGFTLYPVAMAWACEKASADELVAMNQALLMSYTLGSLAGPTMTSLLMQRYSDNLLFIMIAGVAFVYLMMLLRKPDHQQTPYAAV.

The next 10 helical transmembrane spans lie at 8-28 (VLLL…LNTL), 41-61 (WQVG…TLIA), 73-93 (SYHC…LTVD), 94-114 (FWSW…IWVI), 133-153 (AAYM…LGIV), 157-177 (LLSV…PLLF), 208-228 (GCII…LYLS), 274-294 (VVIL…ALFI), 325-345 (ALLM…SLLM), and 349-369 (SDNL…MMLL).

The protein belongs to the major facilitator superfamily. YcaD (TC 2.A.1.26) family.

It is found in the cell inner membrane. This is an uncharacterized protein from Yersinia pseudotuberculosis serotype O:3 (strain YPIII).